The primary structure comprises 488 residues: GTPase Der (488 aa).

EngA-type G domains are found at residues 3–166 and 193–366; these read PVIA…PRDP and IKIA…MSAV. GTP contacts are provided by residues 9-16, 56-60, 118-121, 199-206, 246-250, and 311-314; these read GRPNVGKS, DTGGI, NKID, DTAGV, and NKWD. The KH-like domain occupies 367–451; the sequence is TRWPTSRLTQ…PIRIEYKGGD (85 aa). The segment covering 449-461 has biased composition (basic and acidic residues); sequence GGDNPFEGKKNTL. The interval 449 to 488 is disordered; that stretch reads GGDNPFEGKKNTLTDRQVNKKRRLMSHHKKAEKKRRDKRK. The span at 467 to 488 shows a compositional bias: basic residues; that stretch reads NKKRRLMSHHKKAEKKRRDKRK.

Belongs to the TRAFAC class TrmE-Era-EngA-EngB-Septin-like GTPase superfamily. EngA (Der) GTPase family. In terms of assembly, associates with the 50S ribosomal subunit.

Functionally, GTPase that plays an essential role in the late steps of ribosome biogenesis. In Pseudomonas entomophila (strain L48), this protein is GTPase Der.